Here is a 3394-residue protein sequence, read N- to C-terminus: Protein PFC0760c (3394 aa).

Low complexity-rich tracts occupy residues 471-508 (NNND…NYNN), 515-528 (NMNS…NNLH), and 786-841 (NNQN…NQNN). Disordered stretches follow at residues 471-539 (NNND…DENN), 779-844 (MSSN…NAGI), 1038-1099 (NKKK…NNDD), 1892-1918 (TTTT…NNND), 2648-2693 (KMDL…DNHL), 2835-2909 (AKNE…NSNN), 3000-3057 (VSVG…DVNT), and 3107-3394 (DYVN…NSEE). Positions 1038–1097 (NKKKNNDGDNKSQEDDDGNKKKNNDGDNKSQEDDDGNKKKNNDGDNKSQEDDYGNKKKNN) are enriched in basic and acidic residues. Residues 2657-2671 (GDDDDDDDDDDDDDN) show a composition bias toward acidic residues. Residues 2672-2686 (NNNNNNNNNNNNNNM) show a composition bias toward low complexity. Positions 2836 to 2846 (KNENYPVSTHY) are enriched in polar residues. Composition is skewed to low complexity over residues 2855-2865 (DNINNDNNNDN) and 2872-2909 (NDNI…NSNN). Acidic residues-rich tracts occupy residues 3007-3047 (DNND…EEKE) and 3147-3257 (DDDE…DDND). Residues 3258–3292 (NDHNDDNNDEEKYSCHDDKNEHTNNDLLNIDHDNN) are compositionally biased toward basic and acidic residues. Residues 3300–3309 (LYSTYNVSVS) are compositionally biased toward polar residues. Residues 3310–3320 (HNKDPSNKENE) are compositionally biased toward basic and acidic residues. Polar residues predominate over residues 3321–3330 (IQNLISIDSS). Positions 3331–3379 (NENDENDENDENDENDENDENDENDENDENDENDEKDENDENDENDENF) are enriched in acidic residues. The span at 3385–3394 (GTLNEMNSEE) shows a compositional bias: polar residues.

The polypeptide is Protein PFC0760c (Plasmodium falciparum (isolate 3D7)).